The following is a 218-amino-acid chain: Outer-membrane lipoprotein LolB (218 aa).

Residues methionine 1 to glycine 20 form the signal peptide. Residue cysteine 21 is the site of N-palmitoyl cysteine attachment. Cysteine 21 carries S-diacylglycerol cysteine lipidation.

Belongs to the LolB family. As to quaternary structure, monomer.

The protein localises to the cell outer membrane. In terms of biological role, plays a critical role in the incorporation of lipoproteins in the outer membrane after they are released by the LolA protein. In Xanthomonas campestris pv. campestris (strain 8004), this protein is Outer-membrane lipoprotein LolB.